The chain runs to 332 residues: Clavesin-1 (332 aa).

Residues 96–257 enclose the CRAL-TRIO domain; the sequence is IKRALMDGFP…EFGGTLPPYD (162 aa). The segment at 300–332 is disordered; it reads KYMKRSHSVVEPGTLRHEEERENENTQPLLALD. Residues 313–323 are compositionally biased toward basic and acidic residues; the sequence is TLRHEEERENE.

The protein resides in the golgi apparatus. Its subcellular location is the trans-Golgi network membrane. It localises to the early endosome membrane. It is found in the cytoplasmic vesicle. The protein localises to the clathrin-coated vesicle. Its function is as follows. Required for normal morphology of late endosomes and/or lysosomes in neurons. Binds phosphatidylinositol 3,5-bisphosphate (PtdIns(3,5)P2). This Xenopus laevis (African clawed frog) protein is Clavesin-1 (clvs1).